The chain runs to 179 residues: Shikimate kinase (179 aa).

Gly15 to Ser20 lines the ATP pocket. Residue Thr19 participates in Mg(2+) binding. 3 residues coordinate substrate: Asp37, Arg61, and Gly83. Arg122 is a binding site for ATP. Arg142 is a substrate binding site.

Belongs to the shikimate kinase family. Monomer. The cofactor is Mg(2+).

The protein localises to the cytoplasm. It carries out the reaction shikimate + ATP = 3-phosphoshikimate + ADP + H(+). Its pathway is metabolic intermediate biosynthesis; chorismate biosynthesis; chorismate from D-erythrose 4-phosphate and phosphoenolpyruvate: step 5/7. In terms of biological role, catalyzes the specific phosphorylation of the 3-hydroxyl group of shikimic acid using ATP as a cosubstrate. The sequence is that of Shikimate kinase from Coxiella burnetii (strain RSA 331 / Henzerling II).